Reading from the N-terminus, the 513-residue chain is MIILWLILALSALLYWLHRANKDYHILSFFTKRIRLKDGTPVEIIAPIAKGKTIFGNTLDLYGRDHAGVFNYSRERAKEMGTSYIEYVFGKAIYNIIDADSAENVLNHPNLITKGLVYNFLHPFLRTGLLTSTGKKWHARRKMLTPTFHFNILNQFQEIFKTESQKFLLQFEGQDEVTITLHDVIPRFTLNSICETAMGVKLDEMAEKGDRYRENFSQIEECFIRRLSNPLLWGDKLFEMFAAKDFASALDVVHRFSSEIIAKRRDLLKDELDKSSSTADDDGFVSKKRFAMLDTLIYAEKDGLIDHIGICEEVDTLMFEGYDTTSIGLIFGLMNMSLNPDKQELCYQEIQEHIDDDLSNLDVGQLNKLKYLEYFMKETTRLFPSVPIMGREAVQETELANGLILPKGAQITIHVFDIHRNAKYWDSPEEFRPERFLPENVQDRHTYAYVPFSAGQRNCIGKKYAMQEMKTLMVVLLKQFKVLKAIDPQKIVFHTGITLRTQDKIRVKLVRRT.

2 residues coordinate heme: E320 and C459.

This sequence belongs to the cytochrome P450 family. The cofactor is heme.

The protein resides in the endoplasmic reticulum membrane. Its subcellular location is the microsome membrane. Functionally, may be involved in the metabolism of insect hormones and in the breakdown of synthetic insecticides. The chain is Cytochrome P450 4p1 (Cyp4p1) from Drosophila melanogaster (Fruit fly).